The following is a 398-amino-acid chain: Protein FAM53A (398 aa).

The segment at 85 to 253 (QWQPQSPRPG…TSTPALGGRR (169 aa)) is disordered. The span at 103 to 115 (VDPSESTGSSTAP) shows a compositional bias: polar residues. Basic and acidic residues predominate over residues 123–132 (SLSEPEELVR). Ser125 carries the phosphoserine modification. 2 stretches are compositionally biased toward low complexity: residues 176-193 (STGP…ASGG) and 234-250 (TPLP…PALG). Residues 268 to 276 (KRSRRKRRR) carry the Nuclear localization signal motif. 2 positions are modified to phosphoserine: Ser301 and Ser304. The interval 336-398 (PGCSQRGLRT…ELDLEQIENN (63 aa)) is disordered. Residues 363-375 (GSRRSSGDPRDGD) are compositionally biased toward basic and acidic residues.

The protein belongs to the FAM53 family.

Its subcellular location is the nucleus. May play an important role in neural development; the dorsomedial roof of the third ventricle. The sequence is that of Protein FAM53A from Homo sapiens (Human).